We begin with the raw amino-acid sequence, 235 residues long: Large ribosomal subunit protein uL1 (235 aa).

Belongs to the universal ribosomal protein uL1 family. In terms of assembly, part of the 50S ribosomal subunit.

Its function is as follows. Binds directly to 23S rRNA. The L1 stalk is quite mobile in the ribosome, and is involved in E site tRNA release. In terms of biological role, protein L1 is also a translational repressor protein, it controls the translation of the L11 operon by binding to its mRNA. The chain is Large ribosomal subunit protein uL1 from Nitratidesulfovibrio vulgaris (strain DSM 19637 / Miyazaki F) (Desulfovibrio vulgaris).